Reading from the N-terminus, the 199-residue chain is Golgi to ER traffic protein 1 (199 aa).

Over 1 to 11 the chain is Lumenal; it reads MLLPDLHPYTI. The chain crosses the membrane as a helical span at residues 12–31; sequence LLSIFIVLLLKQLVASIGKS. Residues 32–115 are Cytoplasmic-facing; the sequence is TIKEFVWLVY…SIDKVSNALL (84 aa). The stretch at 66-116 forms a coiled coil; the sequence is EKRAISAQDEYAKWTKLNRQADKLSAELQKLNQEIQQQKASIDKVSNALLL. The chain crosses the membrane as a helical span at residues 116–136; sequence LVLTTLPIWVARVLYRNTHLF. Residues 137–160 are Lumenal-facing; that stretch reads YIRQGIFPKYVEWVLALPFLPNGA. Residues 161-177 traverse the membrane as a helical segment; sequence VGLTIWMFAVNSVVSNF. Topologically, residues 178–199 are cytoplasmic; that stretch reads AFLVSFPFAKKVSKPVRDTKIE.

Belongs to the WRB/GET1 family. As to quaternary structure, component of the Golgi to ER traffic (GET) complex, which is composed of GET1, GET2 and GET3. Within the complex, GET1 and GET2 form a heterotetramer which is stabilized by phosphatidylinositol binding and which binds to the GET3 homodimer.

It localises to the endoplasmic reticulum membrane. The protein localises to the golgi apparatus membrane. In terms of biological role, required for the post-translational delivery of tail-anchored (TA) proteins to the endoplasmic reticulum. Together with GET2, acts as a membrane receptor for soluble GET3, which recognizes and selectively binds the transmembrane domain of TA proteins in the cytosol. The GET complex cooperates with the HDEL receptor ERD2 to mediate the ATP-dependent retrieval of resident ER proteins that contain a C-terminal H-D-E-L retention signal from the Golgi to the ER. The protein is Golgi to ER traffic protein 1 of Candida dubliniensis (strain CD36 / ATCC MYA-646 / CBS 7987 / NCPF 3949 / NRRL Y-17841) (Yeast).